Reading from the N-terminus, the 510-residue chain is Citrate lyase alpha chain (510 aa).

Oligomer with a subunit composition of (alpha,beta,gamma)6.

The protein localises to the cytoplasm. It catalyses the reaction citrate = oxaloacetate + acetate. It carries out the reaction citrate + acetyl-CoA = (3S)-citryl-CoA + acetate. Represents a citrate:acetyl-ACP transferase. This chain is Citrate lyase alpha chain (citF), found in Escherichia coli (strain K12).